Here is a 304-residue protein sequence, read N- to C-terminus: ATP phosphoribosyltransferase (304 aa).

It belongs to the ATP phosphoribosyltransferase family. Long subfamily. It depends on Mg(2+) as a cofactor.

It localises to the cytoplasm. It carries out the reaction 1-(5-phospho-beta-D-ribosyl)-ATP + diphosphate = 5-phospho-alpha-D-ribose 1-diphosphate + ATP. The protein operates within amino-acid biosynthesis; L-histidine biosynthesis; L-histidine from 5-phospho-alpha-D-ribose 1-diphosphate: step 1/9. Its activity is regulated as follows. Feedback inhibited by histidine. Its function is as follows. Catalyzes the condensation of ATP and 5-phosphoribose 1-diphosphate to form N'-(5'-phosphoribosyl)-ATP (PR-ATP). Has a crucial role in the pathway because the rate of histidine biosynthesis seems to be controlled primarily by regulation of HisG enzymatic activity. In Xanthomonas oryzae pv. oryzae (strain MAFF 311018), this protein is ATP phosphoribosyltransferase.